A 106-amino-acid chain; its full sequence is MSKSQSLQDPYLNALRKERVPVSIYLVNGIKLQGQIESFDAFVILLRNNISQMVYKHAVSTIVPSRNIHLSREEMGLEDEAGEEISAEYTPNAEGQAEATADPLYD.

The Sm domain occupies D9 to I68. Residues E78 to D106 form a disordered region.

This sequence belongs to the Hfq family. In terms of assembly, homohexamer.

In terms of biological role, RNA chaperone that binds small regulatory RNA (sRNAs) and mRNAs to facilitate mRNA translational regulation in response to envelope stress, environmental stress and changes in metabolite concentrations. Also binds with high specificity to tRNAs. This chain is RNA-binding protein Hfq, found in Dichelobacter nodosus (strain VCS1703A).